A 326-amino-acid polypeptide reads, in one-letter code: Glycerol-3-phosphate dehydrogenase [NAD(P)+] (326 aa).

NADPH contacts are provided by W15, R35, and K107. Sn-glycerol 3-phosphate-binding residues include K107, G135, and S137. A139 is a binding site for NADPH. Sn-glycerol 3-phosphate contacts are provided by K190, D243, S253, R254, and N255. The Proton acceptor role is filled by K190. R254 lines the NADPH pocket. NADPH contacts are provided by L273 and E275.

Belongs to the NAD-dependent glycerol-3-phosphate dehydrogenase family.

It is found in the cytoplasm. The catalysed reaction is sn-glycerol 3-phosphate + NAD(+) = dihydroxyacetone phosphate + NADH + H(+). It carries out the reaction sn-glycerol 3-phosphate + NADP(+) = dihydroxyacetone phosphate + NADPH + H(+). It functions in the pathway membrane lipid metabolism; glycerophospholipid metabolism. Catalyzes the reduction of the glycolytic intermediate dihydroxyacetone phosphate (DHAP) to sn-glycerol 3-phosphate (G3P), the key precursor for phospholipid synthesis. The polypeptide is Glycerol-3-phosphate dehydrogenase [NAD(P)+] (Bradyrhizobium diazoefficiens (strain JCM 10833 / BCRC 13528 / IAM 13628 / NBRC 14792 / USDA 110)).